The chain runs to 260 residues: Hemin import ATP-binding protein HmuV (260 aa).

The ABC transporter domain maps to 7 to 243 (IQASNISVTF…ERIEQVYGYS (237 aa)). 39–46 (GPNGAGKS) contacts ATP.

The protein belongs to the ABC transporter superfamily. Heme (hemin) importer (TC 3.A.1.14.5) family. The complex is composed of two ATP-binding proteins (HmuV), two transmembrane proteins (HmuU) and a solute-binding protein (HmuT).

The protein localises to the cell inner membrane. Its function is as follows. Part of the ABC transporter complex HmuTUV involved in hemin import. Responsible for energy coupling to the transport system. The chain is Hemin import ATP-binding protein HmuV from Vibrio anguillarum (strain ATCC 68554 / 775) (Listonella anguillarum).